A 773-amino-acid polypeptide reads, in one-letter code: MDVTSSSGGGGDPRQIEETKPLLGGDVSAPEGTKMGAVPCRRALLLCNGMRYKLLQEGDIQVCVIRHPRTFLSKILTSKFLRRWEPHHLTLADNSLASATPTGYMENSVSYSAIEDVQLLSWENAPKYCLQLTIPGGTVLLQAANSYLRDQWFHSLQWKKKIYKYKKVLSNPSRWEVVLKEIRTLVDMALTSPLQDDSINQAPLEIVSKLLSENTNLTTQEHENIIVAIAPLLENNHPPPDLCEFFCKHCRERPRSMVVIEVFTPVVQRILKHNMDFGKCPRLRLFTQEYILALNELNAGMEVVKKFIQSMHGPTGHCPHPRVLPNLVAVCLAAIYSCYEEFINSRDNSPSLKEIRNGCQQPCDRKPTLPLRLLHPSPDLVSQEATLSEARLKSVVVASSEIHVEVERTSTAKPALTASAGNDSEPNLIDCLMVSPACSTMSIELGPQADRTLGCYVEILKLLSDYDDWRPSLASLLQPIPFPKEALAHEKFTKELKYVIQRFAEDPRQEVHSCLLSVRAGKDGWFQLYSPGGVACDDDGELFASMVHILMGSCYKTKKFLLSLAENKLGPCMLLALRGNQTMVEILCLMLEYNIIDNNDTQLQIISTLESTDVGKRMYEQLCDRQRELKELQRKGGPTRLTLPSKSTDADLARLLSSGSFGNLENLSLAFTNVTSACAEHLIKLPSLKQLNLWSTQFGDAGLRLLSEHLTMLQVLNLCETPVTDAGLLALSSMKSLCSLNMNSTKLSADTYEDLKAKLPNLKEVDVRYTEAW.

The segment at 1-30 is disordered; that stretch reads MDVTSSSGGGGDPRQIEETKPLLGGDVSAP. The 110-residue stretch at 54–163 folds into the PH domain; that stretch reads LLQEGDIQVC…HSLQWKKKIY (110 aa). Residues S349, S377, S382, and S660 each carry the phosphoserine modification. LRR repeat units lie at residues 663–686, 687–707, 712–732, and 736–756; these read NLENLSLAFTNVTSACAEHLIKLP, SLKQLNLWSTQFGDAGLRLLS, MLQVLNLCETPVTDAGLLALS, and SLCSLNMNSTKLSADTYEDLK.

Interacts with FLNA. Isoform 1 is expressed in peripheral blood mononuclear cells and kidney. Lower expression in brain and liver. Expression is down-regulated in activated cells. Isoform 2 is expressed in lymphocyte precursors, however, expression shuts down during maturation and differentiation in thymus and fetal liver.

The protein resides in the nucleus. It localises to the cytoplasm. Plays a role in T-cell signaling pathway. Isoform 2 may play a role in T-helper 2 (Th2) signaling pathway and seems to represent the first proximal signaling protein that links T-cell receptor-mediated signal to the activation of c-Maf Th2 specific factor. The protein is C-Maf-inducing protein (CMIP) of Homo sapiens (Human).